We begin with the raw amino-acid sequence, 355 residues long: Blue-sensitive opsin (355 aa).

Over 1–36 the chain is Extracellular; the sequence is MNGTEGINFYVPLSNKTGLVRSPFEYPQYYLAEPWK. N-linked (GlcNAc...) asparagine glycosylation is found at N2 and N15. Residues 37-61 form a helical membrane-spanning segment; the sequence is YKVVCCYIFFLIFTGLPINILTLLV. Over 62–73 the chain is Cytoplasmic; it reads TFKHKKLRQPLN. The helical transmembrane segment at 74 to 98 threads the bilayer; it reads YILVNLAVADLFMACFGFTVTFYTA. The Extracellular portion of the chain corresponds to 99 to 113; it reads WNGYFIFGPIGCAIE. A disulfide bridge links C110 with C187. A helical transmembrane segment spans residues 114–133; it reads GFFATLGGQVALWSLVVLAI. Topologically, residues 134–152 are cytoplasmic; the sequence is ERYIVVCKPMGNFRFSATH. A helical membrane pass occupies residues 153 to 176; it reads ALMGISFTWFMSFSCAAPPLLGWS. At 177–202 the chain is on the extracellular side; sequence RYIPEGMQCSCGPDYYTLNPDYHNES. N200 is a glycosylation site (N-linked (GlcNAc...) asparagine). The chain crosses the membrane as a helical span at residues 203 to 230; sequence YVLYMFGVHFVIPVVVIFFSYGRLICKV. The Cytoplasmic portion of the chain corresponds to 231–252; it reads REAAAQQQESASTQKAEREVTR. A helical transmembrane segment spans residues 253–276; the sequence is MVILMVLGFLLAWTPYAMVAFWIF. Topologically, residues 277-284 are extracellular; that stretch reads TNKGVDFS. A helical transmembrane segment spans residues 285 to 309; it reads ATLMSVPAFFSKSSSLYNPIIYVLM. K296 is modified (N6-(retinylidene)lysine). Residues 310–355 lie on the Cytoplasmic side of the membrane; sequence NKQFRNCMITTICCGKNPFGDEDVSSSVSQSKTEVSSVSSSQVSPA. 2 S-palmitoyl cysteine lipidation sites follow: C322 and C323. Positions 332 to 355 are disordered; the sequence is DVSSSVSQSKTEVSSVSSSQVSPA. A compositionally biased stretch (low complexity) spans 334 to 355; that stretch reads SSSVSQSKTEVSSVSSSQVSPA.

The protein belongs to the G-protein coupled receptor 1 family. Opsin subfamily. Phosphorylated on some or all of the serine and threonine residues present in the C-terminal region.

It localises to the membrane. Visual pigments are the light-absorbing molecules that mediate vision. They consist of an apoprotein, opsin, covalently linked to cis-retinal. This opsin uses a vitamin A2 chromophore. The protein is Blue-sensitive opsin of Anolis carolinensis (Green anole).